The sequence spans 398 residues: Exodeoxyribonuclease 7 large subunit (398 aa).

The protein belongs to the XseA family. As to quaternary structure, heterooligomer composed of large and small subunits.

It is found in the cytoplasm. It carries out the reaction Exonucleolytic cleavage in either 5'- to 3'- or 3'- to 5'-direction to yield nucleoside 5'-phosphates.. In terms of biological role, bidirectionally degrades single-stranded DNA into large acid-insoluble oligonucleotides, which are then degraded further into small acid-soluble oligonucleotides. This Salinibacter ruber (strain DSM 13855 / M31) protein is Exodeoxyribonuclease 7 large subunit.